Consider the following 190-residue polypeptide: Probable nicotinate-nucleotide adenylyltransferase (190 aa).

Belongs to the NadD family.

The enzyme catalyses nicotinate beta-D-ribonucleotide + ATP + H(+) = deamido-NAD(+) + diphosphate. It functions in the pathway cofactor biosynthesis; NAD(+) biosynthesis; deamido-NAD(+) from nicotinate D-ribonucleotide: step 1/1. Catalyzes the reversible adenylation of nicotinate mononucleotide (NaMN) to nicotinic acid adenine dinucleotide (NaAD). This chain is Probable nicotinate-nucleotide adenylyltransferase, found in Frankia casuarinae (strain DSM 45818 / CECT 9043 / HFP020203 / CcI3).